Consider the following 400-residue polypeptide: Forkhead box protein A4-B (400 aa).

Positions 119–213 form a DNA-binding region, fork-head; the sequence is KPPYSYISLI…ENGCYLRRQK (95 aa). Over residues 218–234 the composition is skewed to basic and acidic residues; the sequence is ERSKSGEGERKGNKPGD. The interval 218-290 is disordered; that stretch reads ERSKSGEGER…VGFSPTSEQA (73 aa). 2 stretches are compositionally biased toward polar residues: residues 249–258 and 267–277; these read DCSSSRSPQA and STGSSIHQATG.

Primarily expressed in the dorsal blastopore lip (Spemann organizer) of early gastrulae. At later stages, expressed in the dorsal mesoderm and the neural floor plate. In the dorsal mesoderm, expressed in the notochord but not in the presomitic mesoderm. Also expressed in the mid-brain area.

Its subcellular location is the nucleus. Transcriptional repressor involved in embryonic nervous system development. Plays a role in the induction and patterning of the anterior-posterior neural axis. Involved in the establishment of floor plate differentiation from neural plate cells during gastrulation. Binds the anf1 promoter sequence to restrict expression of anf1 to the anterior of the neural plate, thereby patterning the forebrain. Can bind to the HNF-3-alpha DNA target sequence. Cooperates with t/bra in a dose-dependent manner to specify dorsal mesoderm formation, including notochord. May be involved in the dorso-ventral patterning of the mesoderm. Binds to DNA via the target sequence 5'-[GA]TAAA[TC]A-3', with 5'-GTAAATA-3' being the preferred binding site. This is Forkhead box protein A4-B (foxa4-b) from Xenopus laevis (African clawed frog).